The primary structure comprises 329 residues: 4-hydroxythreonine-4-phosphate dehydrogenase (329 aa).

Positions 137 and 138 each coordinate substrate. The a divalent metal cation site is built by histidine 167, histidine 212, and histidine 267. Residues lysine 275, asparagine 284, and arginine 293 each contribute to the substrate site.

It belongs to the PdxA family. As to quaternary structure, homodimer. Requires Zn(2+) as cofactor. The cofactor is Mg(2+). Co(2+) serves as cofactor.

The protein resides in the cytoplasm. It catalyses the reaction 4-(phosphooxy)-L-threonine + NAD(+) = 3-amino-2-oxopropyl phosphate + CO2 + NADH. It participates in cofactor biosynthesis; pyridoxine 5'-phosphate biosynthesis; pyridoxine 5'-phosphate from D-erythrose 4-phosphate: step 4/5. In terms of biological role, catalyzes the NAD(P)-dependent oxidation of 4-(phosphooxy)-L-threonine (HTP) into 2-amino-3-oxo-4-(phosphooxy)butyric acid which spontaneously decarboxylates to form 3-amino-2-oxopropyl phosphate (AHAP). This chain is 4-hydroxythreonine-4-phosphate dehydrogenase, found in Stutzerimonas stutzeri (strain A1501) (Pseudomonas stutzeri).